We begin with the raw amino-acid sequence, 206 residues long: LexA repressor (206 aa).

Residues 28–48 constitute a DNA-binding region (H-T-H motif); it reads RAEIARELGFRSANAAEEHLK. Active-site for autocatalytic cleavage activity residues include Ser-123 and Lys-160.

This sequence belongs to the peptidase S24 family. In terms of assembly, homodimer.

It carries out the reaction Hydrolysis of Ala-|-Gly bond in repressor LexA.. Its function is as follows. Represses a number of genes involved in the response to DNA damage (SOS response), including recA and lexA. In the presence of single-stranded DNA, RecA interacts with LexA causing an autocatalytic cleavage which disrupts the DNA-binding part of LexA, leading to derepression of the SOS regulon and eventually DNA repair. This chain is LexA repressor, found in Vibrio campbellii (strain ATCC BAA-1116).